The chain runs to 540 residues: Phosphoenolpyruvate carboxykinase (ATP) (540 aa).

Arg65 contacts substrate. Lys87 is modified (N6-acetyllysine). Substrate is bound by residues Tyr207 and Lys213. ATP-binding positions include Lys213, His232, and 248–256 (GLSGTGKTT). Mn(2+) contacts are provided by Lys213 and His232. Residue Asp269 coordinates Mn(2+). ATP is bound by residues Glu297, Arg333, 449 to 450 (RI), and Thr455. Arg333 provides a ligand contact to substrate. N6-acetyllysine is present on Lys523.

Belongs to the phosphoenolpyruvate carboxykinase (ATP) family. As to quaternary structure, monomer. Requires Mn(2+) as cofactor.

Its subcellular location is the cytoplasm. The catalysed reaction is oxaloacetate + ATP = phosphoenolpyruvate + ADP + CO2. Its pathway is carbohydrate biosynthesis; gluconeogenesis. Involved in the gluconeogenesis. Catalyzes the conversion of oxaloacetate (OAA) to phosphoenolpyruvate (PEP) through direct phosphoryl transfer between the nucleoside triphosphate and OAA. This is Phosphoenolpyruvate carboxykinase (ATP) from Escherichia coli O7:K1 (strain IAI39 / ExPEC).